The sequence spans 245 residues: Ubiquinone/menaquinone biosynthesis C-methyltransferase UbiE (245 aa).

S-adenosyl-L-methionine is bound by residues Thr-71, Asp-92, and Asp-118–Ala-119.

The protein belongs to the class I-like SAM-binding methyltransferase superfamily. MenG/UbiE family.

The enzyme catalyses a 2-demethylmenaquinol + S-adenosyl-L-methionine = a menaquinol + S-adenosyl-L-homocysteine + H(+). It catalyses the reaction a 2-methoxy-6-(all-trans-polyprenyl)benzene-1,4-diol + S-adenosyl-L-methionine = a 5-methoxy-2-methyl-3-(all-trans-polyprenyl)benzene-1,4-diol + S-adenosyl-L-homocysteine + H(+). It functions in the pathway quinol/quinone metabolism; menaquinone biosynthesis; menaquinol from 1,4-dihydroxy-2-naphthoate: step 2/2. The protein operates within cofactor biosynthesis; ubiquinone biosynthesis. Its function is as follows. Methyltransferase required for the conversion of demethylmenaquinol (DMKH2) to menaquinol (MKH2) and the conversion of 2-polyprenyl-6-methoxy-1,4-benzoquinol (DDMQH2) to 2-polyprenyl-3-methyl-6-methoxy-1,4-benzoquinol (DMQH2). The polypeptide is Ubiquinone/menaquinone biosynthesis C-methyltransferase UbiE (Neisseria meningitidis serogroup A / serotype 4A (strain DSM 15465 / Z2491)).